The primary structure comprises 95 residues: Small ribosomal subunit protein uS14 (95 aa).

Belongs to the universal ribosomal protein uS14 family. Part of the 30S ribosomal subunit. Contacts proteins S3 and S10.

Functionally, binds 16S rRNA, required for the assembly of 30S particles and may also be responsible for determining the conformation of the 16S rRNA at the A site. The sequence is that of Small ribosomal subunit protein uS14 (rpsN) from Carsonella ruddii.